Here is a 737-residue protein sequence, read N- to C-terminus: Procollagen-lysine,2-oxoglutarate 5-dioxygenase 2 (737 aa).

The N-terminal stretch at Met-1 to Gly-25 is a signal peptide. Asn-63, Asn-209, and Asn-297 each carry an N-linked (GlcNAc...) asparagine glycan. Residue Thr-320 is modified to Phosphothreonine. The residue at position 323 (Tyr-323) is a Phosphotyrosine. Asn-365 and Asn-522 each carry an N-linked (GlcNAc...) asparagine glycan. The region spanning Lys-644–Pro-737 is the Fe2OG dioxygenase domain. Residues His-666 and Asp-668 each coordinate Fe cation. Asn-696 is a glycosylation site (N-linked (GlcNAc...) asparagine). Lys-704 bears the N6-succinyllysine mark. His-718 serves as a coordination point for Fe cation. Asn-725 is a glycosylation site (N-linked (GlcNAc...) asparagine). Arg-728 is a catalytic residue.

As to quaternary structure, homodimer. Fe(2+) is required as a cofactor. L-ascorbate serves as cofactor. In terms of tissue distribution, highly expressed in pancreas and muscle. Isoform 1 and isoform 2 are expressed in the majority of the examined cell types. Isoform 2 is specifically expressed in skin, lung, dura and aorta.

It localises to the rough endoplasmic reticulum membrane. It catalyses the reaction L-lysyl-[collagen] + 2-oxoglutarate + O2 = (5R)-5-hydroxy-L-lysyl-[collagen] + succinate + CO2. Forms hydroxylysine residues in -Xaa-Lys-Gly- sequences in collagens. These hydroxylysines serve as sites of attachment for carbohydrate units and are essential for the stability of the intermolecular collagen cross-links. This is Procollagen-lysine,2-oxoglutarate 5-dioxygenase 2 from Homo sapiens (Human).